The sequence spans 536 residues: L-aspartate oxidase 2 (536 aa).

Residues 22–25 (EGLA) and 51–58 (SSYWAQGG) contribute to the FAD site. The Proton donor/acceptor role is filled by Arg-284. FAD-binding positions include Glu-369 and 385 to 386 (SL).

The protein belongs to the FAD-dependent oxidoreductase 2 family. NadB subfamily. The cofactor is FAD.

The protein resides in the cytoplasm. The catalysed reaction is L-aspartate + O2 = iminosuccinate + H2O2. It functions in the pathway cofactor biosynthesis; NAD(+) biosynthesis; iminoaspartate from L-aspartate (oxidase route): step 1/1. In terms of biological role, catalyzes the oxidation of L-aspartate to iminoaspartate, the first step in the de novo biosynthesis of NAD(+). The protein is L-aspartate oxidase 2 (nadB2) of Ralstonia nicotianae (strain ATCC BAA-1114 / GMI1000) (Ralstonia solanacearum).